We begin with the raw amino-acid sequence, 354 residues long: DNA polymerase IV (354 aa).

The region spanning 6-187 is the UmuC domain; it reads IIHVDCDCFY…LPVARLHGVG (182 aa). Mg(2+) contacts are provided by D10 and D105. E106 is an active-site residue.

The protein belongs to the DNA polymerase type-Y family. In terms of assembly, monomer. It depends on Mg(2+) as a cofactor.

The protein localises to the cytoplasm. It carries out the reaction DNA(n) + a 2'-deoxyribonucleoside 5'-triphosphate = DNA(n+1) + diphosphate. Functionally, poorly processive, error-prone DNA polymerase involved in untargeted mutagenesis. Copies undamaged DNA at stalled replication forks, which arise in vivo from mismatched or misaligned primer ends. These misaligned primers can be extended by PolIV. Exhibits no 3'-5' exonuclease (proofreading) activity. May be involved in translesional synthesis, in conjunction with the beta clamp from PolIII. The chain is DNA polymerase IV from Pseudomonas putida (strain ATCC 700007 / DSM 6899 / JCM 31910 / BCRC 17059 / LMG 24140 / F1).